Consider the following 323-residue polypeptide: PTS system mannose-specific EIIAB component (323 aa).

Residues Thr2–Glu124 form the PTS EIIA type-4 domain. Residue His10 is the Tele-phosphohistidine intermediate; for EIIA activity of the active site. His10 carries the post-translational modification Phosphohistidine; by HPr. Position 55 is an N6-acetyllysine (Lys55). The segment at Ala137–Pro155 is hinge. The 164-residue stretch at Gly157–Lys320 folds into the PTS EIIB type-4 domain. Residue His175 is the Pros-phosphohistidine intermediate; for EIIB activity of the active site. A Phosphohistidine; by EIIA modification is found at His175. Lys234 is subject to N6-acetyllysine.

Homodimer.

It localises to the cytoplasm. The protein localises to the cell inner membrane. It carries out the reaction D-mannose(out) + N(pros)-phospho-L-histidyl-[protein] = D-mannose 6-phosphate(in) + L-histidyl-[protein]. Its function is as follows. The phosphoenolpyruvate-dependent sugar phosphotransferase system (sugar PTS), a major carbohydrate active transport system, catalyzes the phosphorylation of incoming sugar substrates concomitantly with their translocation across the cell membrane. The enzyme II ManXYZ PTS system is involved in mannose transport. This is PTS system mannose-specific EIIAB component (manX) from Escherichia coli O157:H7.